The sequence spans 146 residues: Cytochrome b5 type B (146 aa).

A propeptide spanning residues M1 to E11 is cleaved from the precursor. Position 19 is a phosphoserine (S19). One can recognise a Cytochrome b5 heme-binding domain in the interval V20–H96. K30 is subject to N6-acetyllysine. Residue S33 is modified to Phosphoserine. H55 and H79 together coordinate heme. S80 is modified (phosphoserine). A helical membrane pass occupies residues W119–Y136.

The protein belongs to the cytochrome b5 family. As to quaternary structure, component of a complex composed of cytochrome b5, NADH-cytochrome b5 reductase (CYB5R3) and MTARC2.

It localises to the mitochondrion outer membrane. In terms of biological role, cytochrome b5 is a membrane-bound hemoprotein functioning as an electron carrier for several membrane-bound oxygenases. The chain is Cytochrome b5 type B (Cyb5b) from Mus musculus (Mouse).